We begin with the raw amino-acid sequence, 162 residues long: Ribosomal RNA large subunit methyltransferase H (162 aa).

2 residues coordinate S-adenosyl-L-methionine: Leu78 and Gly110.

It belongs to the RNA methyltransferase RlmH family. Homodimer.

The protein resides in the cytoplasm. It carries out the reaction pseudouridine(1915) in 23S rRNA + S-adenosyl-L-methionine = N(3)-methylpseudouridine(1915) in 23S rRNA + S-adenosyl-L-homocysteine + H(+). Specifically methylates the pseudouridine at position 1915 (m3Psi1915) in 23S rRNA. The protein is Ribosomal RNA large subunit methyltransferase H of Bradyrhizobium sp. (strain ORS 278).